The following is a 118-amino-acid chain: MARIAGVNIPDNKHTVISLTYIYGVGRTTAQNICAATGVNPAAKIKDLSDEQIDQLRNEVAKHTTEGDLRREINMNIKRLMDLGCYRGLRHRRGLPVRGQRTKTNARTRKGPRKPIRK.

Positions 93-118 are disordered; sequence RGLPVRGQRTKTNARTRKGPRKPIRK.

Belongs to the universal ribosomal protein uS13 family. In terms of assembly, part of the 30S ribosomal subunit. Forms a loose heterodimer with protein S19. Forms two bridges to the 50S subunit in the 70S ribosome.

Its function is as follows. Located at the top of the head of the 30S subunit, it contacts several helices of the 16S rRNA. In the 70S ribosome it contacts the 23S rRNA (bridge B1a) and protein L5 of the 50S subunit (bridge B1b), connecting the 2 subunits; these bridges are implicated in subunit movement. Contacts the tRNAs in the A and P-sites. The protein is Small ribosomal subunit protein uS13 of Pseudomonas paraeruginosa (strain DSM 24068 / PA7) (Pseudomonas aeruginosa (strain PA7)).